Reading from the N-terminus, the 442-residue chain is UDP-N-acetylmuramate--L-alanine ligase (442 aa).

109–115 is a binding site for ATP; sequence GAHGKTS.

The protein belongs to the MurCDEF family.

The protein resides in the cytoplasm. The enzyme catalyses UDP-N-acetyl-alpha-D-muramate + L-alanine + ATP = UDP-N-acetyl-alpha-D-muramoyl-L-alanine + ADP + phosphate + H(+). It participates in cell wall biogenesis; peptidoglycan biosynthesis. Its function is as follows. Cell wall formation. This is UDP-N-acetylmuramate--L-alanine ligase from Streptococcus pyogenes serotype M28 (strain MGAS6180).